We begin with the raw amino-acid sequence, 275 residues long: ADP-dependent (S)-NAD(P)H-hydrate dehydratase (275 aa).

In terms of domain architecture, YjeF C-terminal spans 5–273 (TDEILAKVIK…EEIPLFMKKY (269 aa)). Positions 40, 103, and 151 each coordinate (6S)-NADPHX. G214 provides a ligand contact to AMP. Position 215 (D215) interacts with (6S)-NADPHX.

It belongs to the NnrD/CARKD family. In terms of assembly, homotetramer. It depends on Mg(2+) as a cofactor.

It carries out the reaction (6S)-NADHX + ADP = AMP + phosphate + NADH + H(+). It catalyses the reaction (6S)-NADPHX + ADP = AMP + phosphate + NADPH + H(+). Catalyzes the dehydration of the S-form of NAD(P)HX at the expense of ADP, which is converted to AMP. Together with NAD(P)HX epimerase, which catalyzes the epimerization of the S- and R-forms, the enzyme allows the repair of both epimers of NAD(P)HX, a damaged form of NAD(P)H that is a result of enzymatic or heat-dependent hydration. This Lactococcus lactis subsp. lactis (strain IL1403) (Streptococcus lactis) protein is ADP-dependent (S)-NAD(P)H-hydrate dehydratase.